The sequence spans 247 residues: 3-deoxy-manno-octulosonate cytidylyltransferase (247 aa).

It belongs to the KdsB family.

Its subcellular location is the cytoplasm. It catalyses the reaction 3-deoxy-alpha-D-manno-oct-2-ulosonate + CTP = CMP-3-deoxy-beta-D-manno-octulosonate + diphosphate. Its pathway is nucleotide-sugar biosynthesis; CMP-3-deoxy-D-manno-octulosonate biosynthesis; CMP-3-deoxy-D-manno-octulosonate from 3-deoxy-D-manno-octulosonate and CTP: step 1/1. It participates in bacterial outer membrane biogenesis; lipopolysaccharide biosynthesis. Its function is as follows. Activates KDO (a required 8-carbon sugar) for incorporation into bacterial lipopolysaccharide in Gram-negative bacteria. The chain is 3-deoxy-manno-octulosonate cytidylyltransferase from Pelodictyon phaeoclathratiforme (strain DSM 5477 / BU-1).